The primary structure comprises 340 residues: Phosphate acyltransferase (340 aa).

This sequence belongs to the PlsX family. As to quaternary structure, homodimer. Probably interacts with PlsY.

Its subcellular location is the cytoplasm. The enzyme catalyses a fatty acyl-[ACP] + phosphate = an acyl phosphate + holo-[ACP]. Its pathway is lipid metabolism; phospholipid metabolism. In terms of biological role, catalyzes the reversible formation of acyl-phosphate (acyl-PO(4)) from acyl-[acyl-carrier-protein] (acyl-ACP). This enzyme utilizes acyl-ACP as fatty acyl donor, but not acyl-CoA. The chain is Phosphate acyltransferase from Trichodesmium erythraeum (strain IMS101).